A 1021-amino-acid polypeptide reads, in one-letter code: INO80 complex subunit D (1021 aa).

Residue lysine 87 forms a Glycyl lysine isopeptide (Lys-Gly) (interchain with G-Cter in SUMO2) linkage. Residue serine 132 is modified to Phosphoserine. 5 disordered regions span residues 194-239 (FSTP…PMQG), 514-570 (RGDN…SMPT), 808-844 (RQQYSSDHSHSSPHGSHYDSEHVPSPYSDHITSPHTS), 911-940 (SLSTPPTTSNSETTQPAFATVTPSSSSVLP), and 976-1021 (QLSS…PSPN). Over residues 224-239 (VCKSPQPQNTSLPMQG) the composition is skewed to polar residues. The segment covering 520–554 (KVQHQQQRKPRKKTKPPALTKKHKKKRRRGPRRPQ) has biased composition (basic residues). The span at 911–926 (SLSTPPTTSNSETTQP) shows a compositional bias: low complexity. The span at 931-940 (VTPSSSSVLP) shows a compositional bias: polar residues. Residues 995–1014 (APPTGFTATGATATSTNNAS) are compositionally biased toward low complexity.

The protein belongs to the INO80D family. As to quaternary structure, component of the chromatin remodeling INO80 complex; specifically part of a complex module associated with the N-terminus of INO80.

Its subcellular location is the nucleus. Functionally, putative regulatory component of the chromatin remodeling INO80 complex which is involved in transcriptional regulation, DNA replication and probably DNA repair. The chain is INO80 complex subunit D from Mus musculus (Mouse).